The sequence spans 149 residues: Down syndrome critical region protein 9 (149 aa).

Positions 1-41 (MGRICPVNSRARRLRARPGRPSGDSLPYHQLQGGAPRLWSP) are disordered.

As to expression, testis specific.

The sequence is that of Down syndrome critical region protein 9 (DSCR9) from Homo sapiens (Human).